A 532-amino-acid polypeptide reads, in one-letter code: Flavin-containing monooxygenase 1 (532 aa).

Residues 1–510 (MVKRVAIVGA…TRTIQESPSS (510 aa)) are Lumenal-facing. FAD-binding positions include 9–13 (GAGVS), glutamate 32, 40–41 (LW), and 61–62 (NS). NADP(+) is bound by residues 60-61 (SN) and 195-198 (SGTD). A helical membrane pass occupies residues 511 to 531 (FETLLKLFSFLALLIAVFLIF). A topological domain (cytoplasmic) is located at residue leucine 532.

The protein belongs to the FMO family. FAD serves as cofactor. In terms of tissue distribution, liver.

The protein localises to the endoplasmic reticulum membrane. It carries out the reaction hypotaurine + NADPH + O2 + H(+) = taurine + NADP(+) + H2O. The enzyme catalyses hypotaurine + NADH + O2 + H(+) = taurine + NAD(+) + H2O. It catalyses the reaction trimethylamine + NADPH + O2 = trimethylamine N-oxide + NADP(+) + H2O. The catalysed reaction is N,N-dimethylaniline + NADPH + O2 + H(+) = N,N-dimethylaniline N-oxide + NADP(+) + H2O. Its function is as follows. Broad spectrum monooxygenase that catalyzes the oxygenation of a wide variety of nitrogen- and sulfur-containing compounds including xenobiotics. Catalyzes the S-oxygenation of hypotaurine to produce taurine, an organic osmolyte involved in cell volume regulation as well as a variety of cytoprotective and developmental processes. In vitro, catalyzes the N-oxygenation of trimethylamine (TMA) to produce trimethylamine N-oxide (TMAO) and could therefore participate to the detoxification of this compound that is generated by the action of gut microbiota from dietary precursors such as choline, choline containing compounds, betaine or L-carnitine. The polypeptide is Flavin-containing monooxygenase 1 (Mus musculus (Mouse)).